Here is a 589-residue protein sequence, read N- to C-terminus: Arginine--tRNA ligase (589 aa).

The 'HIGH' region signature appears at 132 to 142 (PNTNKPLHVGH).

It belongs to the class-I aminoacyl-tRNA synthetase family. As to quaternary structure, monomer.

It localises to the cytoplasm. It catalyses the reaction tRNA(Arg) + L-arginine + ATP = L-arginyl-tRNA(Arg) + AMP + diphosphate. This chain is Arginine--tRNA ligase, found in Treponema pallidum subsp. pallidum (strain SS14).